A 424-amino-acid polypeptide reads, in one-letter code: Tyrosine--tRNA ligase (424 aa).

Tyr-37 provides a ligand contact to L-tyrosine. Positions 42 to 51 (PTADSLHLGH) match the 'HIGH' region motif. Position 144 is an N6-acetyllysine (Lys-144). L-tyrosine-binding residues include Tyr-175 and Gln-179. The short motif at 235–239 (KFGKT) is the 'KMSKS' region element. Lys-238 lines the ATP pocket. In terms of domain architecture, S4 RNA-binding spans 357–414 (ADLMQALVDSELQPSRGQARKTIASNAVTINGEKQSDPEYFFKEEDRLFGRFTLLRRG).

The protein belongs to the class-I aminoacyl-tRNA synthetase family. TyrS type 1 subfamily. As to quaternary structure, homodimer.

It is found in the cytoplasm. The enzyme catalyses tRNA(Tyr) + L-tyrosine + ATP = L-tyrosyl-tRNA(Tyr) + AMP + diphosphate + H(+). In terms of biological role, catalyzes the attachment of tyrosine to tRNA(Tyr) in a two-step reaction: tyrosine is first activated by ATP to form Tyr-AMP and then transferred to the acceptor end of tRNA(Tyr). In Escherichia fergusonii (strain ATCC 35469 / DSM 13698 / CCUG 18766 / IAM 14443 / JCM 21226 / LMG 7866 / NBRC 102419 / NCTC 12128 / CDC 0568-73), this protein is Tyrosine--tRNA ligase.